The following is a 3021-amino-acid chain: MSTLPKPQRKTKRNTIRRPQDVKFPGGGQIVGGVYVLPRRGPRLGVRATRKTSERSQPRGRRQPIPKARRSEGRSWAQPGYPWPLYGNEGCGWAGWLLSPRGSRPSWGPNDPRRRSRNLGKVIDTLTCGFADLMGYIPLVGAPVGGVARALAHGVRALEDGINFATGNLPGCSFSIFLLALFSCLIHPAASLEWRNTSGLYVLTNDCSNSSIVYEADDVILHTPGCVPCVQDGNTSTCWTPVTPTVAVRYVGATTASIRSHVDLLVGAATMCSALYVGDMCGAVFLVGQAFTFRPRRHQTVQTCNCSLYPGHLSGHRMAWDMMMNWSPAVGMVVAHVLRLPQTLFDIMAGAHWGILAGLAYYSMQGNWAKVAIIMVMFSGVDAHTYTTGGTASRHTQAFAGLFDIGPQQKLQLVNTNGSWHINSTALNCNESINTGFIAGLFYYHKFNSTGCPQRLSSCKPITFFRQGWGPLTDANITGPSDDRPYCWHYAPRPCDIVPASSVCGPVYCFTPSPVVVGTTDARGVPTYTWGENEKDVFLLKSQRPPSGRWFGCSWMNSTGFLKTCGAPPCNIYGGEGNPHNESDLFCPTDCFRKHPETTYSRCGAGPWLTPRCMVDYPYRLWHYPCTVDFRLFKVRMFVGGFEHRFTAACNWTRGERCDIEDRDRSEQHPLLHSTTELAILPCSFTPMPALSTGLIHLHQNIVDVQYLYGVGSGMVGWALKWEFVILVFLLLADARVCVALWLMLMISQTEAALENLVTLNAVAAAGTHGIGWYLVAFCAAWYVRGKLVPLVTYSLTGLWSLALLVLLLPQRAYAWSGEDSATLGAGVLVLFGFFTLSPWYKHWIGRLMWWNQYTICRCESALHVWVPPLLARGSRDGVILLTSLLYPSLIFDITKLLMAVLGPLYLIQATITTTPYFVRAHVLVRLCMLVRSVIGGKYFQMIILSIGRWFNTYLYDHLAPMQHWAAAGLKDLAVATEPVIFSPMEIKVITWGADTAACGDILCGLPVSARLGREVLLGPADDYREMGWRLLAPITAYAQQTRGLLGTIVTSLTGRDKNVVTGEVQVLSTATQTFLGTTVGGVIWTVYHGAGSRTLAGAKHPALQMYTNVDQDLVGWPAPPGAKSLEPCACGSSDLYLVTRDADVIPARRRGDSTASLLSPRPLACLKGSSGGPVMCPSGHVAGIFRAAVCTRGVAKSLQFIPVETLSTQARSPSFSDNSTPPAVPQSYQVGYLHAPTGSGKSTKVPAAYVAQGYNVLVLNPSVAATLGFGSFMSRAYGIDPNIRTGNRTVTTGAKLTYSTYGKFLADGGCSGGAYDVIICDECHAQDATSILGIGTVLDQAETAGVRLTVLATATPPGSITVPHSNIEEVALGSEGEIPFYGKAIPIALLKGGRHLIFCHSKKKCDEIASKLRGMGLNAVAYYRGLDVSVIPTTGDVVVCATDALMTGFTGDFDSVIDCNVAVEQYVDFSLDPTFSIETRTAPQDAVSRSQRRGRTGRGRLGTYRYVASGERPSGMFDSVVLCECYDAGCSWYDLQPAETTVRLRAYLSTPGLPVCQDHLDFWESVFTGLTHIDAHFLSQTKQQGLNFSYLTAYQATVCARAQAPPPSWDEMWKCLVRLKPTLHGPTPLLYRLGPVQNETCLTHPITKYLMACMSADLEVTTSTWVLLGGVLAALAAYCLSVGCVVIVGHIELEGKPALVPDKEVLYQQYDEMEECSQAAPYIEQAQVIAHQFKEKILGLLQRATQQQAVIEPIVTTNWQKLEAFWHKHMWNFVSGIQYLAGLSTLPGNPAVASLMAFTASVTSPLTTNQTMFFNILGGWVATHLAGPQSSSAFVVSGLAGAAIGGIGLGRVLLDILAGYGAGVSGALVAFKIMGGECPTAEDMVNLLPAILSPGALVVGVICAAILRRHVGPGEGAVQWMNRLIAFASRGNHVSPTHYVPESDAAARVTALLSSLTVTSLLRRLHQWINEDYPSPCSDDWLRTIWDWVCSVLADFKAWLSAKIMPALPGLPFISCQKGYKGVWRGDGVMSTRCPCGAAITGHVKNGSMRLAGPRTCANMWHGTFPINEYTTGPSTPCPSPNYTRALWRVAANSYVEVRRVGDFHYITGATEDELKCPCQVPAAEFFTEVDGVRLHRYAPPCKPLLRDDITFMVGLHSYTIGSQLPCEPEPDVSVLTSMLRDPSHITAETAARRLARGSPPSEASSSASQLSAPSLKATCQTHRPHPDAELVDANLLWRQEMGSNITRVESETKVVVLDSFEPLRAETDDVEPSVAAECFKKPPKYPPALPIWARPDYNPPLLDRWKAPDYVPPTVHGCALPPRGAPPVPPPRRKRTIQLDGSNVSAALAALAEKSFPSSKPQEENSSSSGVDTQSSTTSKVPPSPGGESDSESCSSMPPLEGEPGDPDLSCDSWSTVSDSEEQSVVCCSMSYSWTGALITPCSAEEEKLPISPLSNSLLRHHNLVYSTSSRSASQRQKKVTFDRLQVLDDHYKTALKEVKERASRVKARMLTIEEACALVPPHSARSKFGYSAKDVRSLSSRAINQIRSVWEDLLEDTTTPIPTTIMAKNEVFCVDPAKGGRKPARLIVYPDLGVRVCEKRALYDVIQKLSIETMGPAYGFQYSPQQRVERLLKMWTSKKTPLGFSYDTRCFDSTVTEQDIRVEEEIYQCCNLEPEARKVISSLTERLYCGGPMFNSKGAQCGYRRCRASGVLPTSFGNTITCYIKATAAAKAANLRNPDFLVCGDDLVVVAESDGVDEDRAALRAFTEAMTRYSAPPGDAPQATYDLELITSCSSNVSVARDDKGRRYYYLTRDATTPLARAAWETARHTPVNSWLGNIIMYAPTIWVRMVMMTHFFSILQSQEILDRPLDFEMYGATYSVTPLDLPAIIERLHGLSAFTLHSYSPVELNRVAGTLRKLGCPPLRAWRHRARAVRAKLIAQGGKAKICGLYLFNWAVRTKTNLTPLPAAGQLDLSSWFTVGVGGNDIYHSVSRARTRHLLLCLLLLTVGVGIFLLPAR.

Ser-2 carries the N-acetylserine; by host modification. The segment at 2–23 (STLPKPQRKTKRNTIRRPQDVK) is interaction with STAT1. Positions 2–58 (STLPKPQRKTKRNTIRRPQDVKFPGGGQIVGGVYVLPRRGPRLGVRATRKTSERSQP) are interaction with EIF2AK2/PKR. An interaction with DDX3X region spans residues 2 to 59 (STLPKPQRKTKRNTIRRPQDVKFPGGGQIVGGVYVLPRRGPRLGVRATRKTSERSQPR). The tract at residues 2–75 (STLPKPQRKT…PKARRSEGRS (74 aa)) is disordered. Topologically, residues 2 to 168 (STLPKPQRKT…EDGINFATGN (167 aa)) are cytoplasmic. Short sequence motifs (nuclear localization signal) lie at residues 5-13 (PKPQRKTKR) and 38-43 (PRRGPR). The span at 7–16 (PQRKTKRNTI) shows a compositional bias: basic residues. At Ser-53 the chain carries Phosphoserine; by host. Short sequence motifs (nuclear localization signal) lie at residues 58-64 (PRGRRQP) and 66-71 (PKARRS). Residues 58 to 68 (PRGRRQPIPKA) are compositionally biased toward basic residues. Ser-99 is subject to Phosphoserine; by host. The interval 112–152 (PRRRSRNLGKVIDTLTCGFADLMGYIPLVGAPVGGVARALA) is important for endoplasmic reticulum and mitochondrial localization. Residue Ser-116 is modified to Phosphoserine; by host PKA. Residues 122–173 (VIDTLTCGFADLMGYIPLVGAPVGGVARALAHGVRALEDGINFATGNLPGCS) form an interaction with APOA2 region. The important for lipid droplets localization stretch occupies residues 164–167 (FATG). A helical membrane pass occupies residues 169–189 (LPGCSFSIFLLALFSCLIHPA). The propeptide at 178–191 (LLALFSCLIHPAAS) is ER anchor for the core protein, removed in mature form by host signal peptidase. Over 190 to 358 (ASLEWRNTSG…AGAHWGILAG (169 aa)) the chain is Lumenal. N-linked (GlcNAc...) asparagine; by host glycosylation is found at Asn-196, Asn-209, and Asn-234. The important for fusion stretch occupies residues 265–296 (LVGAATMCSALYVGDMCGAVFLVGQAFTFRPR). Asn-305 carries an N-linked (GlcNAc...) asparagine; by host glycan. A helical membrane pass occupies residues 359 to 379 (LAYYSMQGNWAKVAIIMVMFS). Topologically, residues 380-731 (GVDAHTYTTG…WEFVILVFLL (352 aa)) are lumenal. Residues 385 to 412 (TYTTGGTASRHTQAFAGLFDIGPQQKLQ) form an HVR1 region. N-linked (GlcNAc...) (high mannose) asparagine; by host glycosylation is found at Asn-417, Asn-423, and Asn-430. Intrachain disulfides connect Cys-429–Cys-553, Cys-452–Cys-459, Cys-487–Cys-495, and Cys-504–Cys-509. A glycan (N-linked (GlcNAc...) asparagine; by host) is linked at Asn-448. Residues 474–479 (DANITG) form an HVR2 region. Asn-476 carries N-linked (GlcNAc...) asparagine; by host glycosylation. A CD81-binding 1 region spans residues 481–494 (SDDRPYCWHYAPRP). Asn-533 is a glycosylation site (N-linked (GlcNAc...) asparagine; by host). Positions 545–552 (PPSGRWFG) are CD81-binding 2. An N-linked (GlcNAc...) asparagine; by host glycan is attached at Asn-557. Cys-565 and Cys-570 form a disulfide bridge. Asn-578 carries an N-linked (GlcNAc...) asparagine; by host glycan. 3 cysteine pairs are disulfide-bonded: Cys-587–Cys-591, Cys-603–Cys-626, and Cys-613–Cys-650. N-linked (GlcNAc...) (high mannose) asparagine; by host glycosylation occurs at Asn-651. A disulfide bond links Cys-658 and Cys-683. The PKR/eIF2-alpha phosphorylation homology domain (PePHD) stretch occupies residues 666 to 677 (SEQHPLLHSTTE). The helical transmembrane segment at 732–752 (LADARVCVALWLMLMISQTEA) threads the bilayer. The Lumenal portion of the chain corresponds to 753–763 (ALENLVTLNAV). A helical membrane pass occupies residues 764-784 (AAAGTHGIGWYLVAFCAAWYV). At 785 to 787 (RGK) the chain is on the cytoplasmic side. A helical transmembrane segment spans residues 788-809 (LVPLVTYSLTGLWSLALLVLLL). Topologically, residues 810 to 819 (PQRAYAWSGE) are lumenal. A helical transmembrane segment spans residues 820–840 (DSATLGAGVLVLFGFFTLSPW). At 841–844 (YKHW) the chain is on the cytoplasmic side. A helical transmembrane segment spans residues 845-864 (IGRLMWWNQYTICRCESALH). The Lumenal portion of the chain corresponds to 865–887 (VWVPPLLARGSRDGVILLTSLLY). The chain crosses the membrane as a helical span at residues 888–908 (PSLIFDITKLLMAVLGPLYLI). The Peptidase C18 domain occupies 905 to 1032 (LYLIQATITT…DYREMGWRLL (128 aa)). Residues 909–1663 (QATITTTPYF…CMSADLEVTT (755 aa)) lie on the Cytoplasmic side of the membrane. The tract at residues 910–1212 (ATITTTPYFV…PVETLSTQAR (303 aa)) is protease NS2-3. A lipid anchor (S-palmitoyl cysteine; by host) is attached at Cys-928. An interaction with host SCPS1 region spans residues 935–955 (IGGKYFQMIILSIGRWFNTYL). Active-site for protease NS2 activity; shared with dimeric partner residues include His-958, Glu-978, and Cys-999. In terms of domain architecture, Peptidase S29 spans 1033–1214 (APITAYAQQT…ETLSTQARSP (182 aa)). Catalysis depends on charge relay system; for serine protease NS3 activity residues His-1089 and Asp-1113. Positions 1129 and 1131 each coordinate Zn(2+). Ser-1171 acts as the Charge relay system; for serine protease NS3 activity in catalysis. Positions 1177 and 1181 each coordinate Zn(2+). The 153-residue stretch at 1223 to 1375 (PAVPQSYQVG…SNIEEVALGS (153 aa)) folds into the Helicase ATP-binding domain. 1236–1243 (APTGSGKS) is a binding site for ATP. Positions 1243 and 1323 each coordinate Mg(2+). The DECH box signature appears at 1322-1325 (DECH). The region spanning 1382–1544 (YGKAIPIALL…DLQPAETTVR (163 aa)) is the Helicase C-terminal domain. The interval 1492 to 1504 (QRRGRTGRGRLGT) is RNA-binding. Residues 1664–1684 (STWVLLGGVLAALAAYCLSVG) traverse the membrane as a helical segment. The segment at 1685–1696 (CVVIVGHIELEG) is NS3-binding. Residues 1685-1811 (CVVIVGHIEL…SVTSPLTTNQ (127 aa)) are Cytoplasmic-facing. The chain crosses the membrane as a helical span at residues 1812-1830 (TMFFNILGGWVATHLAGPQ). Over 1831–1834 (SSSA) the chain is Lumenal. A helical transmembrane segment spans residues 1835–1855 (FVVSGLAGAAIGGIGLGRVLL). A topological domain (cytoplasmic) is located at residue Asp-1856. Residues 1857–1877 (ILAGYGAGVSGALVAFKIMGG) traverse the membrane as a helical segment. The Lumenal segment spans residues 1878–1887 (ECPTAEDMVN). The helical transmembrane segment at 1888 to 1908 (LLPAILSPGALVVGVICAAIL) threads the bilayer. The Cytoplasmic segment spans residues 1909–1978 (RRHVGPGEGA…WINEDYPSPC (70 aa)). Cys-1978 is lipidated: S-palmitoyl cysteine; by host. The stretch at 1979-2008 (SDDWLRTIWDWVCSVLADFKAWLSAKIMPA) is an intramembrane region. Over 2009–3000 (LPGLPFISCQ…YHSVSRARTR (992 aa)) the chain is Cytoplasmic. Positions 2017, 2035, 2037, and 2058 each coordinate Zn(2+). Residues 2126-2214 (EFFTEVDGVR…ASSSASQLSA (89 aa)) are FKBP8-binding. The tract at residues 2126 to 2338 (EFFTEVDGVR…PVPPPRRKRT (213 aa)) is transcriptional activation. The interaction with non-structural protein 4A stretch occupies residues 2141 to 2145 (PPCKP). Residues 2193–2215 (ARRLARGSPPSEASSSASQLSAP) are disordered. The interval 2195-2448 (RLARGSPPSE…ALITPCSAEE (254 aa)) is interaction with host SKP2. 6 positions are modified to phosphoserine; by host: Ser-2200, Ser-2203, Ser-2207, Ser-2210, Ser-2213, and Ser-2216. Positions 2200-2215 (SPPSEASSSASQLSAP) are enriched in low complexity. The segment at 2216-2255 (SLKATCQTHRPHPDAELVDANLLWRQEMGSNITRVESETK) is ISDR. Positions 2216–2281 (SLKATCQTHR…VEPSVAAECF (66 aa)) are interaction with EIF2AK2/PKR. Residues 2255–2312 (KVVVLDSFEPLRAETDDVEPSVAAECFKKPPKYPPALPIWARPDYNPPLLDRWKAPDY) are NS4B-binding. Positions 2305-2387 (DRWKAPDYVP…STTSKVPPSP (83 aa)) are V3. The short motif at 2328–2331 (PPVP) is the SH3-binding element. A Nuclear localization signal motif is present at residues 2333–2341 (PRRKRTIQL). Lys-2356 participates in a covalent cross-link: Glycyl lysine isopeptide (Lys-Gly) (interchain with G-Cter in ubiquitin). A disordered region spans residues 2356–2417 (KSFPSSKPQE…DPDLSCDSWS (62 aa)). Low complexity-rich tracts occupy residues 2359–2381 (PSSK…STTS) and 2388–2401 (GGES…SMPP). 2 positions are modified to phosphoserine; by host: Ser-2459 and Ser-2472. Residues 2644–2762 (PLGFSYDTRC…VAESDGVDED (119 aa)) enclose the RdRp catalytic domain. 3 residues coordinate Mg(2+): Asp-2650, Asp-2748, and Asp-2749. Residues 3001 to 3021 (HLLLCLLLLTVGVGIFLLPAR) form a helical membrane-spanning segment.

Belongs to the hepacivirus polyprotein family. Homooligomer. Interacts with E1 (via C-terminus). Interacts with the non-structural protein 5A. Interacts (via N-terminus) with host STAT1 (via SH2 domain); this interaction results in decreased STAT1 phosphorylation and ubiquitin-mediated proteasome-dependent STAT1 degradation, leading to decreased IFN-stimulated gene transcription. Interacts with host STAT3; this interaction constitutively activates STAT3. Interacts with host LTBR receptor. Interacts with host TNFRSF1A receptor and possibly induces apoptosis. Interacts with host HNRPK. Interacts with host YWHAE. Interacts with host UBE3A/E6AP. Interacts with host DDX3X. Interacts with host APOA2. Interacts with host RXRA protein. Interacts with host SP110 isoform 3/Sp110b; this interaction sequesters the transcriptional corepressor SP110 away from the nucleus. Interacts with host CREB3 nuclear transcription protein; this interaction triggers cell transformation. Interacts with host ACY3. Interacts with host C1QR1. Interacts with host RBM24; this interaction, which enhances the interaction of the mature core protein with 5'-UTR, may inhibit viral translation and favor replication. Interacts with host EIF2AK2/PKR; this interaction induces the autophosphorylation of EIF2AK2. Part of the viral assembly initiation complex composed of NS2, E1, E2, NS3, NS4A, NS5A and the mature core protein. As to quaternary structure, forms a heterodimer with envelope glycoprotein E2. Interacts with mature core protein. Interacts with protease NS2. The heterodimer E1/E2 interacts with host CLDN1; this interaction plays a role in viral entry into host cell. Interacts with host SPSB2 (via C-terminus). Part of the viral assembly initiation complex composed of NS2, E1, E2, NS3, NS4A, NS5A and the mature core protein. Interacts with host NEURL3; this interaction prevents E1 binding to glycoprotein E2. In terms of assembly, forms a heterodimer with envelope glycoprotein E1. Interacts with host CD81 and SCARB1 receptors; these interactions play a role in viral entry into host cell. Interacts with host EIF2AK2/PKR; this interaction inhibits EIF2AK2 and probably allows the virus to evade the innate immune response. Interacts with host CD209/DC-SIGN and CLEC4M/DC-SIGNR. Interact with host SPCS1; this interaction is essential for viral particle assembly. Interacts with protease NS2. The heterodimer E1/E2 interacts with host CLDN1; this interaction plays a role in viral entry into host cell. Part of the viral assembly initiation complex composed of NS2, E1, E2, NS3, NS4A, NS5A and the mature core protein. Interacts with host SLC3A2/4F2hc; the interaction may facilitate viral entry into host cell. Interacts with human PLSCR1. Homohexamer. Homoheptamer. Interacts with protease NS2. As to quaternary structure, homodimer. Interacts with host SPCS1; this interaction is essential for viral particle assembly. Interacts with envelope glycoprotein E1. Interacts with envelope glycoprotein E2. Interacts with viroporin p7. Interacts with serine protease/helicase NS3. Part of the replication complex composed of NS2, NS3, NS4A, NS4B, NS5A and the RNA-directed RNA polymerase embedded in an ER-derived membranous web. Part of the viral assembly initiation complex composed of NS2, E1, E2, NS3, NS4A, NS5A and the mature core protein. In terms of assembly, interacts with protease NS2. Interacts with non-structural protein 4A; this interaction stabilizes the folding of NS3 serine protease. NS3-NS4A interaction is essential for NS3 activation and allows membrane anchorage of the latter. NS3/NS4A complex also prevents phosphorylation of host IRF3, thus preventing the establishment of dsRNA induced antiviral state. Interacts with host MAVS; this interaction leads to the cleavage and inhibition of host MAVS. Interacts with host TICAM1; this interaction leads to the cleavage and inhibition of host TICAM1. Interacts with host TANK-binding kinase/TBK1; this interaction results in the inhibition of the association between TBK1 and IRF3, which leads to the inhibition of IRF3 activation. Interacts with host RBM24. Part of the replication complex composed of NS2, NS3, NS4A, NS4B, NS5A and the RNA-directed RNA polymerase embedded in an ER-derived membranous web. Part of the viral assembly initiation complex composed of NS2, E1, E2, NS3, NS4A, NS5A and the mature core protein. Interacts with NS3 serine protease; this interaction stabilizes the folding of NS3 serine protease. NS3-NS4A interaction is essential for NS3 activation and allows membrane anchorage of the latter. Interacts with non-structural protein 5A (via N-terminus). Part of the replication complex composed of NS2, NS3, NS4A, NS4B, NS5A and the RNA-directed RNA polymerase embedded in an ER-derived membranous web. Part of the viral assembly initiation complex composed of NS2, E1, E2, NS3, NS4A, NS5A and the mature core protein. As to quaternary structure, homomultimer. Interacts with non-structural protein NS5A. Interacts with host PLA2G4C; this interaction likely initiates the recruitment of replication complexes to lipid droplets. Interacts with host STING; this interaction disrupts the interaction between STING and TBK1 thereby suppressing the interferon signaling. Part of the replication complex composed of NS2, NS3, NS4A, NS4B, NS5A and the RNA-directed RNA polymerase embedded in an ER-derived membranous web. In terms of assembly, monomer. Homodimer; dimerization is required for RNA-binding. Interacts with the mature core protein. Interacts (via N-terminus) with non-structural protein 4A. Interacts with non-structural protein 4B. Interacts (via region D2) with RNA-directed RNA polymerase. Part of the viral assembly initiation complex composed of NS2, E1, E2, NS3, NS4A, NS5A and the mature core protein. Part of the replication complex composed of NS2, NS3, NS4A, NS4B, NS5A and the RNA-directed RNA polymerase embedded in an ER-derived membranous web. Interacts with host GRB2. Interacts with host BIN1. Interacts with host PIK3R1. Interacts with host SRCAP. Interacts with host FKBP8. Interacts (via C-terminus) with host VAPB (via MSP domain). Interacts with host EIF2AK2/PKR; this interaction leads to disruption of EIF2AK2 dimerization by NS5A and probably allows the virus to evade the innate immune response. Interacts (via N-terminus) with host PACSIN2 (via N-terminus); this interaction attenuates protein kinase C alpha-mediated phosphorylation of PACSIN2 by disrupting the interaction between PACSIN2 and PRKCA. Interacts (via N-terminus) with host SRC kinase (via SH2 domain). Interacts with most Src-family kinases. Interacts with host IFI27 and SKP2; promotes the ubiquitin-mediated proteasomal degradation of NS5A. Interacts with host GPS2. Interacts with host TNFRSF21; this interaction allows the modulation by the virus of JNK, p38 MAPK, STAT3, and Akt signaling pathways in a DR6-dependent manner. Interacts (via N-terminus) with host CIDEB (via N-terminus); this interaction seems to regulate the association of HCV particles with APOE. Interacts with host CHKA/Choline Kinase-alpha; CHKA bridges host PI4KA and NS5A and potentiates NS5A-stimulated PI4KA activity, which then facilitates the targeting of the ternary complex to the ER for viral replication. Interacts with host SPSB2 (via C-terminus); this interaction targets NS5A for ubiquitination and degradation. Interacts with host RAB18; this interaction may promote the association of NS5A and other replicase components with lipid droplets. Interacts (via region D2) with host PPIA/CYPA; the interaction stimulates RNA-binding ability of NS5A and is dependent on the peptidyl-prolyl cis-trans isomerase activity of PPIA/CYPA. Interacts with host TRIM14; this interaction induces the degradation of NS5A. Homooligomer. Interacts with non-structural protein 5A. Interacts with host VAPB. Interacts with host PRK2/PKN2. Interacts with host HNRNPA1 and SEPT6; these interactions facilitate viral replication. Part of the replication complex composed of NS2, NS3, NS4A, NS4B, NS5A and the RNA-directed RNA polymerase. Requires Zn(2+) as cofactor. Mg(2+) serves as cofactor. Specific enzymatic cleavages in vivo yield mature proteins. The structural proteins, core, E1, E2 and p7 are produced by proteolytic processing by host signal peptidases. The core protein precursor is synthesized as a 23 kDa, which is retained in the ER membrane through the hydrophobic signal peptide. Cleavage by the signal peptidase releases the 21 kDa mature core protein. The cleavage of the core protein precursor occurs between aminoacids 176 and 188 but the exact cleavage site is not known. Some degraded forms of the core protein appear as well during the course of infection. The other proteins (p7, NS2, NS3, NS4A, NS4B, NS5A and NS5B) are cleaved by the viral proteases. Autoprocessing between NS2 and NS3 is mediated by the NS2 cysteine protease catalytic domain and regulated by the NS3 N-terminal domain. Post-translationally, phosphorylated by host PKC and PKA. In terms of processing, ubiquitinated; mediated by UBE3A and leading to core protein subsequent proteasomal degradation. Highly N-glycosylated. Post-translationally, palmitoylation is required for NS2/3 autoprocessing and E2 recruitment to membranes. In terms of processing, palmitoylated. This modification may play a role in its polymerization or in protein-protein interactions. Phosphorylated on serines in a basal form termed p56. p58 is a hyperphosphorylated form of p56. p56 and p58 coexist in the cell in roughly equivalent amounts. Hyperphosphorylation is dependent on the presence of NS4A. Host CSNK1A1/CKI-alpha or RPS6KB1 kinases may be responsible for NS5A phosphorylation. Post-translationally, tyrosine phosphorylation is essential for the interaction with host SRC. In terms of processing, ubiquitinated. Ubiquitination, most probably at Lys-2350, mediated by host IFI27 and SKP2 leads to proteasomal degradation, restricting viral infection. Ubiquitination by host TRIM22 leads to interruption of viral replication. The N-terminus is phosphorylated by host PRK2/PKN2.

The protein localises to the host endoplasmic reticulum membrane. The protein resides in the host mitochondrion membrane. Its subcellular location is the virion. It localises to the host cytoplasm. It is found in the host nucleus. The protein localises to the host lipid droplet. The protein resides in the virion membrane. Its subcellular location is the host mitochondrion. It localises to the host cell membrane. It is found in the host perinuclear region. It catalyses the reaction Hydrolysis of four peptide bonds in the viral precursor polyprotein, commonly with Asp or Glu in the P6 position, Cys or Thr in P1 and Ser or Ala in P1'.. The enzyme catalyses a ribonucleoside 5'-triphosphate + H2O = a ribonucleoside 5'-diphosphate + phosphate + H(+). It carries out the reaction ATP + H2O = ADP + phosphate + H(+). The catalysed reaction is RNA(n) + a ribonucleoside 5'-triphosphate = RNA(n+1) + diphosphate. Its activity is regulated as follows. Inhibited by the antiviral drug hexamethylene amiloride. Inhibition by amantadine appears to be genotype-dependent. Also inhibited by long-alkyl-chain iminosugar derivatives. Activity is up-regulated by PRK2/PKN2-mediated phosphorylation. Functionally, packages viral RNA to form a viral nucleocapsid, and promotes virion budding. Participates in the viral particle production as a result of its interaction with the non-structural protein 5A. Binds RNA and may function as a RNA chaperone to induce the RNA structural rearrangements taking place during virus replication. Modulates viral translation initiation by interacting with viral IRES and 40S ribosomal subunit. Affects various cell signaling pathways, host immunity and lipid metabolism. Prevents the establishment of cellular antiviral state by blocking the interferon-alpha/beta (IFN-alpha/beta) and IFN-gamma signaling pathways and by blocking the formation of phosphorylated STAT1 and promoting ubiquitin-mediated proteasome-dependent degradation of STAT1. Activates STAT3 leading to cellular transformation. Regulates the activity of cellular genes, including c-myc and c-fos. May repress the promoter of p53, and sequester CREB3 and SP110 isoform 3/Sp110b in the cytoplasm. Represses cell cycle negative regulating factor CDKN1A, thereby interrupting an important check point of normal cell cycle regulation. Targets transcription factors involved in the regulation of inflammatory responses and in the immune response: suppresses TNF-induced NF-kappa-B activation, and activates AP-1. Binds to dendritic cells (DCs) via C1QR1, resulting in down-regulation of T-lymphocytes proliferation. Alters lipid metabolism by interacting with hepatocellular proteins involved in lipid accumulation and storage. Induces up-regulation of FAS promoter activity, and thereby contributes to the increased triglyceride accumulation in hepatocytes (steatosis). Its function is as follows. Forms a heterodimer with envelope glycoprotein E2, which mediates virus attachment to the host cell, virion internalization through clathrin-dependent endocytosis and fusion with host membrane. Fusion with the host cell is most likely mediated by both E1 and E2, through conformational rearrangements of the heterodimer required for fusion rather than a classical class II fusion mechanism. E1/E2 heterodimer binds host apolipoproteins such as APOB and ApoE thereby forming a lipo-viro-particle (LVP). APOE associated to the LVP allows the initial virus attachment to cell surface receptors such as the heparan sulfate proteoglycans (HSPGs), syndecan-1 (SDC1), syndecan-1 (SDC2), the low-density lipoprotein receptor (LDLR) and scavenger receptor class B type I (SCARB1). The cholesterol transfer activity of SCARB1 allows E2 exposure and binding of E2 to SCARB1 and the tetraspanin CD81. E1/E2 heterodimer binding on CD81 activates the epithelial growth factor receptor (EGFR) signaling pathway. Diffusion of the complex E1-E2-EGFR-SCARB1-CD81 to the cell lateral membrane allows further interaction with Claudin 1 (CLDN1) and occludin (OCLN) to finally trigger HCV entry. Forms a heterodimer with envelope glycoprotein E1, which mediates virus attachment to the host cell, virion internalization through clathrin-dependent endocytosis and fusion with host membrane. Fusion with the host cell is most likely mediated by both E1 and E2, through conformational rearrangements of the heterodimer required for fusion rather than a classical class II fusion mechanism. The interaction between envelope glycoprotein E2 and host apolipoprotein E/APOE allows the proper assembly, maturation and infectivity of the viral particles. This interaction is probably promoted via the up-regulation of cellular autophagy by the virus. E1/E2 heterodimer binds host apolipoproteins such as APOB and APOE thereby forming a lipo-viro-particle (LVP). APOE associated to the LVP allows the initial virus attachment to cell surface receptors such as the heparan sulfate proteoglycans (HSPGs), syndecan-1 (SDC1), syndecan-1 (SDC2), the low-density lipoprotein receptor (LDLR) and scavenger receptor class B type I (SCARB1). The cholesterol transfer activity of SCARB1 allows E2 exposure and binding of E2 to SCARB1 and the tetraspanin CD81. E1/E2 heterodimer binding on CD81 activates the epithelial growth factor receptor (EGFR) signaling pathway. Diffusion of the complex E1-E2-EGFR-SCARB1-CD81 to the cell lateral membrane allows further interaction with Claudin 1 (CLDN1) and occludin (OCLN) to finally trigger HCV entry. Inhibits host EIF2AK2/PKR activation, preventing the establishment of an antiviral state. Viral ligand for CD209/DC-SIGN and CLEC4M/DC-SIGNR, which are respectively found on dendritic cells (DCs), and on liver sinusoidal endothelial cells and macrophage-like cells of lymph node sinuses. These interactions allow the capture of circulating HCV particles by these cells and subsequent facilitated transmission to permissive cells such as hepatocytes and lymphocyte subpopulations. The interaction between E2 and host amino acid transporter complex formed by SLC3A2 and SLC7A5/LAT1 may facilitate viral entry into host cell. In terms of biological role, ion channel protein that acts as a viroporin and plays an essential role in the assembly, envelopment and secretion of viral particles. Regulates the host cell secretory pathway, which induces the intracellular retention of viral glycoproteins and favors assembly of viral particles. Creates a pore in acidic organelles and releases Ca(2+) and H(+) in the cytoplasm of infected cells, leading to a productive viral infection. High levels of cytoplasmic Ca(2+) may trigger membrane trafficking and transport of viral ER-associated proteins to viroplasms, sites of viral genome replication. This ionic imbalance induces the assembly of the inflammasome complex, which triggers the maturation of pro-IL-1beta into IL-1beta through the action of caspase-1. Targets also host mitochondria and induces mitochondrial depolarization. In addition of its role as a viroporin, acts as a lipid raft adhesion factor. Functionally, cysteine protease required for the proteolytic auto-cleavage between the non-structural proteins NS2 and NS3. The N-terminus of NS3 is required for the function of NS2 protease (active region NS2-3). Promotes the initiation of viral particle assembly by mediating the interaction between structural and non-structural proteins. Its function is as follows. Displays three enzymatic activities: serine protease with a chymotrypsin-like fold, NTPase and RNA helicase. NS3 serine protease, in association with NS4A, is responsible for the cleavages of NS3-NS4A, NS4A-NS4B, NS4B-NS5A and NS5A-NS5B. The NS3/NS4A complex prevents phosphorylation of host IRF3, thus preventing the establishment of dsRNA induced antiviral state. The NS3/NS4A complex induces host amino acid transporter component SLC3A2, thus contributing to HCV propagation. NS3 RNA helicase binds to RNA and unwinds both dsDNA and dsRNA in the 3' to 5' direction, and likely resolves RNA complicated stable secondary structures in the template strand. Binds a single ATP and catalyzes the unzipping of a single base pair of dsRNA. Inhibits host antiviral proteins TBK1 and IRF3 thereby preventing the establishment of an antiviral state. Cleaves host MAVS/CARDIF thereby preventing the establishment of an antiviral state. Cleaves host TICAM1/TRIF, thereby disrupting TLR3 signaling and preventing the establishment of an antiviral state. Peptide cofactor which forms a non-covalent complex with the N-terminal of NS3 serine protease. The NS3/NS4A complex prevents phosphorylation of host IRF3, thus preventing the establishment of dsRNA induced antiviral state. The NS3/NS4A complex induces host amino acid transporter component SLC3A2, thus contributing to HCV propagation. In terms of biological role, induces a specific membrane alteration that serves as a scaffold for the virus replication complex. This membrane alteration gives rise to the so-called ER-derived membranous web that contains the replication complex. NS4B self-interaction contributes to its function in membranous web formation. Promotes host TRIF protein degradation in a CASP8-dependent manner thereby inhibiting host TLR3-mediated interferon signaling. Disrupts the interaction between STING and TBK1 contributing to the inhibition of interferon signaling. Functionally, phosphorylated protein that is indispensable for viral replication and assembly. Both hypo- and hyperphosphorylated states are required for the viral life cycle. The hyperphosphorylated form of NS5A is an inhibitor of viral replication. Involved in RNA-binding and especially in binding to the viral genome. Zinc is essential for RNA-binding. Participates in the viral particle production as a result of its interaction with the mature viral core protein. Its interaction with host VAPB may target the viral replication complex to vesicles. Down-regulates viral IRES translation initiation. Mediates interferon resistance, presumably by interacting with and inhibiting host EIF2AK2/PKR. Prevents BIN1-induced apoptosis. Acts as a transcriptional activator of some host genes important for viral replication when localized in the nucleus. Via the interaction with host PACSIN2, modulates lipid droplet formation in order to promote virion assembly. Modulates TNFRSF21/DR6 signaling pathway for viral propagation. Its function is as follows. RNA-dependent RNA polymerase that performs primer-template recognition and RNA synthesis during viral replication. Initiates RNA transcription/replication at a flavin adenine dinucleotide (FAD), resulting in a 5'- FAD cap on viral RNAs. In this way, recognition of viral 5' RNA by host pattern recognition receptors can be bypassed, thereby evading activation of antiviral pathways. This chain is Genome polyprotein, found in Homo sapiens (Human).